The sequence spans 260 residues: (R)-2-hydroxyglutaryl-CoA dehydratase activating ATPase (260 aa).

12 to 16 (STASK) serves as a coordination point for ATP. Residues Cys127 and Cys166 each contribute to the [4Fe-4S] cluster site. Residues Gln220 and Gln243 each coordinate ATP.

Belongs to the HgdC family. As to quaternary structure, homodimer. [4Fe-4S] cluster is required as a cofactor. It depends on Mg(2+) as a cofactor.

The catalysed reaction is ATP + H2O = ADP + phosphate + H(+). Its pathway is amino-acid degradation; L-glutamate degradation via hydroxyglutarate pathway; crotonoyl-CoA from L-glutamate: step 4/5. Its activity is regulated as follows. Inactivated by exposure to air within less than 15 minutes. Involved in the fermentation of L-glutamate via the hydroxyglutarate pathway. HgdC (CompA) has a very low ATPase activity, whose the role is to activate dehydratase HgdA-HgdB complex and then maintain an appropriate redox state via an ATP-dependent electron transfer. The dehydratase requires only catalytic amounts of ATP and substoichiometric amounts of HgdC (CompA) to be functional. This chain is (R)-2-hydroxyglutaryl-CoA dehydratase activating ATPase, found in Acidaminococcus fermentans (strain ATCC 25085 / DSM 20731 / CCUG 9996 / CIP 106432 / VR4).